The following is a 562-amino-acid chain: MNQAVAESINKSLKSSTADYTPKGYHITELESDSIYLDEHFSGNAKIFHNPAVAVLYEQALAFEHGSAITSTGALVTRSGVKTGRSPKDKRIVKEPSSQDDIWWGPVNIAMDDLSFMINRERAIDYLNTQEKIYVIDGYAGWDPKYRIKVRVICARAYHALFMHNMLIRPANREELRNFGEPDYTIYNAGQFPANRYTKGMSSSSSIAIDFARKEMVILGTQYAGEMKKGILTIMMYLMPKMGVLPLHSSCNQARNNGDTTLFFGLSGTGKTTLSADINRELIGDDEHVWTDTGCFNIEGGCYAKCIDLSREKEPEIFDAIKFGAVLENVVYNEYSRKVDYNDVSITENTRCAYPLEHIPNAKFPAIAGHPKNIIMLTCDAFGILPPVSRLDANQVMYHFIQGYTAKVAGTEVGVTEPTATFSSCYGEPFIVWHPTKYAEMLASQLHKHSARAWLINTGWTGGSHGVGSRIKLAYTRAIIDAIHSGELEKIPTTKMDVFGFQVPNSCPGVPSEILMPINGWADKEKYVSTMHKLAKLFIENFKKFQDKASPELVAAGPILPQ.

Residue 265 to 272 (GLSGTGKT) coordinates ATP.

The protein belongs to the phosphoenolpyruvate carboxykinase (ATP) family.

The enzyme catalyses oxaloacetate + ATP = phosphoenolpyruvate + ADP + CO2. Its pathway is carbohydrate biosynthesis; gluconeogenesis. This Dictyostelium discoideum (Social amoeba) protein is Phosphoenolpyruvate carboxykinase (ATP) (pckA).